We begin with the raw amino-acid sequence, 289 residues long: Glucosamine-6-phosphate deaminase 1 (289 aa).

Lys-64 is subject to N6-acetyllysine. The active-site Proton acceptor; for enolization step is the Asp-72. The For ring-opening step role is filled by Asp-141. His-143 acts as the Proton acceptor; for ring-opening step in catalysis. The active-site For ring-opening step is Glu-148. Thr-161 is subject to Phosphothreonine.

The protein belongs to the glucosamine/galactosamine-6-phosphate isomerase family. As to quaternary structure, homohexamer. At the equatorial segment of the sperm head.

The protein resides in the cytoplasm. The enzyme catalyses alpha-D-glucosamine 6-phosphate + H2O = beta-D-fructose 6-phosphate + NH4(+). The protein operates within nucleotide-sugar biosynthesis; UDP-N-acetyl-alpha-D-glucosamine biosynthesis; alpha-D-glucosamine 6-phosphate from D-fructose 6-phosphate: step 1/1. Allosterically activated by N-acetylglucosamine-6-phosphate (GlcNAc6P). Its function is as follows. Catalyzes the reversible conversion of alpha-D-glucosamine 6-phosphate (GlcN-6P) into beta-D-fructose 6-phosphate (Fru-6P) and ammonium ion, a regulatory reaction step in de novo uridine diphosphate-N-acetyl-alpha-D-glucosamine (UDP-GlcNAc) biosynthesis via hexosamine pathway. Deamination is coupled to aldo-keto isomerization mediating the metabolic flux from UDP-GlcNAc toward Fru-6P. At high ammonium level can drive amination and isomerization of Fru-6P toward hexosamines and UDP-GlcNAc synthesis. Has a role in fine tuning the metabolic fluctuations of cytosolic UDP-GlcNAc and their effects on hyaluronan synthesis that occur during tissue remodeling. Seems to trigger calcium oscillations in mammalian eggs. These oscillations serve as the essential trigger for egg activation and early development of the embryo. This chain is Glucosamine-6-phosphate deaminase 1, found in Mesocricetus auratus (Golden hamster).